A 378-amino-acid polypeptide reads, in one-letter code: Cln5-like protein 1 (378 aa).

The N-terminal stretch at 1 to 20 (MNKIIIFILFLISILQSVRG) is a signal peptide. 8 N-linked (GlcNAc...) asparagine glycosylation sites follow: asparagine 63, asparagine 93, asparagine 135, asparagine 181, asparagine 220, asparagine 226, asparagine 254, and asparagine 280. A helical membrane pass occupies residues 308-328 (WIFIIILLSFTTVYLVGGILI).

It belongs to the CLN5 family.

Its subcellular location is the membrane. The chain is Cln5-like protein 1 (cln5la) from Dictyostelium discoideum (Social amoeba).